A 443-amino-acid chain; its full sequence is ATP-dependent protease ATPase subunit HslU (443 aa).

Residues Val18 and 60–65 (GVGKTE) contribute to the ATP site. A disordered region spans residues 136–158 (LPPPRDFNEDSQRTNADSSTRQL). Positions 148–157 (RTNADSSTRQ) are enriched in polar residues. 3 residues coordinate ATP: Asp256, Glu321, and Arg393.

The protein belongs to the ClpX chaperone family. HslU subfamily. In terms of assembly, a double ring-shaped homohexamer of HslV is capped on each side by a ring-shaped HslU homohexamer. The assembly of the HslU/HslV complex is dependent on binding of ATP.

The protein resides in the cytoplasm. Functionally, ATPase subunit of a proteasome-like degradation complex; this subunit has chaperone activity. The binding of ATP and its subsequent hydrolysis by HslU are essential for unfolding of protein substrates subsequently hydrolyzed by HslV. HslU recognizes the N-terminal part of its protein substrates and unfolds these before they are guided to HslV for hydrolysis. In Marinobacter nauticus (strain ATCC 700491 / DSM 11845 / VT8) (Marinobacter aquaeolei), this protein is ATP-dependent protease ATPase subunit HslU.